Here is a 204-residue protein sequence, read N- to C-terminus: Minor allergen Alt a 7 (204 aa).

In terms of domain architecture, Flavodoxin-like spans 5-195 (IAIVYYSMYG…NIAQAQGKAF (191 aa)).

Belongs to the WrbA family.

The protein resides in the cytoplasm. The sequence is that of Minor allergen Alt a 7 (ALTA7) from Alternaria alternata (Alternaria rot fungus).